A 376-amino-acid polypeptide reads, in one-letter code: UPF0754 membrane protein BLi01057/BL02871 (376 aa).

Transmembrane regions (helical) follow at residues 1 to 21 and 356 to 376; these read MYVF…GAVT and YLGG…VILI.

The protein belongs to the UPF0754 family.

The protein resides in the cell membrane. The sequence is that of UPF0754 membrane protein BLi01057/BL02871 from Bacillus licheniformis (strain ATCC 14580 / DSM 13 / JCM 2505 / CCUG 7422 / NBRC 12200 / NCIMB 9375 / NCTC 10341 / NRRL NRS-1264 / Gibson 46).